We begin with the raw amino-acid sequence, 40 residues long: Protein P4 (40 aa).

A helical transmembrane segment spans residues 10-29 (KYFAYGVAISAAGAILAEYV).

The protein localises to the virion membrane. May interact with the viral DNA. In Pseudoalteromonas phage PM2 (Bacteriophage PM2), this protein is Protein P4 (IV).